The chain runs to 574 residues: Hyaluronan synthase 3 (574 aa).

The Cytoplasmic portion of the chain corresponds to 1–15; that stretch reads MPVSLSTALRVVGTS. A helical membrane pass occupies residues 16–36; sequence LFALAVLGGILAAYVTGYQFI. Over 37–44 the chain is Extracellular; that stretch reads HTEKHYLS. A helical membrane pass occupies residues 45–65; the sequence is FGLYGAILGLHLFIQSLFAFL. The Cytoplasmic segment spans residues 66–398; that stretch reads EHRRMRAERQ…NALWFHKHHL (333 aa). Residues 399 to 419 form a helical membrane-spanning segment; the sequence is WMTYESVVTGFFPFFLIATVI. The Extracellular segment spans residues 420 to 429; sequence QLFYRGRIWN. A helical transmembrane segment spans residues 430–450; it reads ILLFLLTVQLVGIIKATYACF. The Cytoplasmic portion of the chain corresponds to 451 to 456; it reads LRGSAE. The chain crosses the membrane as a helical span at residues 457 to 477; the sequence is MIFVSLYALLYMSSLLPAKMF. Residues 478-494 are Extracellular-facing; that stretch reads AIATINKSGWGTSGRRT. Residues 495–515 form a helical membrane-spanning segment; sequence IVVNFVGLLPVSVWAAVLLGG. At 516 to 530 the chain is on the cytoplasmic side; the sequence is LAYTAYSQDLLSDTE. Residues 531 to 551 form a helical membrane-spanning segment; the sequence is VAFLISGAVLYACYWVALLTL. At 552 to 574 the chain is on the extracellular side; the sequence is YLAMVARRCGKRKEQCGLVFAEV.

The protein belongs to the NodC/HAS family. Mg(2+) is required as a cofactor. Post-translationally, O-GlcNAcylation increases the hyaluronan synthase activity, HAS3 stability and its plasma membrane residence. The concentration of UDP-GlcNAc controls the level of O-GlcNAc modification.

It localises to the cell membrane. Its subcellular location is the golgi apparatus membrane. The protein resides in the golgi apparatus. The protein localises to the trans-Golgi network membrane. It is found in the cytoplasmic vesicle. The enzyme catalyses [hyaluronan](n) + UDP-N-acetyl-alpha-D-glucosamine = N-acetyl-beta-D-glucosaminyl-(1-&gt;4)-[hyaluronan](n) + UDP + H(+). It catalyses the reaction N-acetyl-beta-D-glucosaminyl-(1-&gt;4)-[hyaluronan](n) + UDP-alpha-D-glucuronate = [hyaluronan](n+1) + UDP + H(+). It functions in the pathway glycan biosynthesis; hyaluronan biosynthesis. Catalyzes the addition of GlcNAc or GlcUA monosaccharides to the nascent hyaluronan polymer. Therefore, it is essential to hyaluronan synthesis a major component of most extracellular matrices that has a structural role in tissues architectures and regulates cell adhesion, migration and differentiation. This is one of three isoenzymes responsible for cellular hyaluronan synthesis. This Gallus gallus (Chicken) protein is Hyaluronan synthase 3 (HAS3).